The chain runs to 460 residues: Flavin-containing monooxygenase FMO GS-OX-like 9 (460 aa).

20-25 (GAGPAG) provides a ligand contact to FAD. 222–227 (GNSMSG) provides a ligand contact to NADP(+).

This sequence belongs to the FMO family. FAD is required as a cofactor.

Catalyzes the conversion of methylthioalkyl glucosinolates of any chain length into methylsulfinylalkyl glucosinolates. In Arabidopsis thaliana (Mouse-ear cress), this protein is Flavin-containing monooxygenase FMO GS-OX-like 9.